The following is a 267-amino-acid chain: Extensin (267 aa).

Residues M1–Y267 form a disordered region. 13 consecutive repeats follow at residues P18–T33, P34–T54, P55–T70, P71–T91, P92–T107, P108–T128, P129–T144, P145–T160, P161–T179, P180–T195, P196–T211, P212–T232, and P233–T253. The interval P18 to T253 is highly repetitive. A compositionally biased stretch (pro residues) spans T20–Y267. An extensin repetitive element region spans residues S261–P265.

Hydroxylated on proline residues in the S-P-P-P-P repeat. Post-translationally, O-glycosylated on hydroxyprolines. Mainly in the coleoptile node and root tip.

It is found in the secreted. It localises to the primary cell wall. In terms of biological role, structural component in primary cell wall. In Zea mays (Maize), this protein is Extensin (HRGP).